Here is a 603-residue protein sequence, read N- to C-terminus: Phosphomethylpyrimidine synthase (603 aa).

Residues N224, M253, Y282, H318, 338–340, 379–382, and E418 contribute to the substrate site; these read SRG and DGLR. H422 provides a ligand contact to Zn(2+). A substrate-binding site is contributed by Y445. H486 lines the Zn(2+) pocket. [4Fe-4S] cluster is bound by residues C566, C569, and C574.

It belongs to the ThiC family. As to quaternary structure, homodimer. The cofactor is [4Fe-4S] cluster.

The enzyme catalyses 5-amino-1-(5-phospho-beta-D-ribosyl)imidazole + S-adenosyl-L-methionine = 4-amino-2-methyl-5-(phosphooxymethyl)pyrimidine + CO + 5'-deoxyadenosine + formate + L-methionine + 3 H(+). The protein operates within cofactor biosynthesis; thiamine diphosphate biosynthesis. In terms of biological role, catalyzes the synthesis of the hydroxymethylpyrimidine phosphate (HMP-P) moiety of thiamine from aminoimidazole ribotide (AIR) in a radical S-adenosyl-L-methionine (SAM)-dependent reaction. The protein is Phosphomethylpyrimidine synthase of Xylella fastidiosa (strain Temecula1 / ATCC 700964).